The following is a 235-amino-acid chain: UPF0702 transmembrane protein YdfS (235 aa).

Transmembrane regions (helical) follow at residues M32–Y52 and N60–I80.

The protein belongs to the UPF0702 family.

The protein localises to the cell membrane. In Bacillus subtilis (strain 168), this protein is UPF0702 transmembrane protein YdfS (ydfS).